Reading from the N-terminus, the 737-residue chain is Ribosome-releasing factor 2, mitochondrial (737 aa).

The N-terminal 29 residues, 1–29, are a transit peptide targeting the mitochondrion; that stretch reads MLKYALHSGGMPRNRLLRQLSAHIFRRSY. One can recognise a tr-type G domain in the interval 31–310; sequence SNIRNIGILA…AVNTYLPAPE (280 aa). GTP is bound by residues 40–47, 104–108, and 158–161; these read AHIDAGKT, DTPGH, and NKMD.

The protein belongs to the TRAFAC class translation factor GTPase superfamily. Classic translation factor GTPase family. EF-G/EF-2 subfamily.

It localises to the mitochondrion. Mitochondrial GTPase that mediates the disassembly of ribosomes from messenger RNA at the termination of mitochondrial protein biosynthesis. Not involved in the GTP-dependent ribosomal translocation step during translation elongation. The protein is Ribosome-releasing factor 2, mitochondrial of Drosophila pseudoobscura pseudoobscura (Fruit fly).